The following is a 451-amino-acid chain: Trigger factor (451 aa).

One can recognise a PPIase FKBP-type domain in the interval 165 to 250 (DDKLTIDFEG…LRQIQAREAL (86 aa)).

The protein belongs to the FKBP-type PPIase family. Tig subfamily.

The protein localises to the cytoplasm. It carries out the reaction [protein]-peptidylproline (omega=180) = [protein]-peptidylproline (omega=0). Functionally, involved in protein export. Acts as a chaperone by maintaining the newly synthesized protein in an open conformation. Functions as a peptidyl-prolyl cis-trans isomerase. This is Trigger factor from Helicobacter pylori (strain Shi470).